Reading from the N-terminus, the 219-residue chain is Large ribosomal subunit protein uL3 (219 aa).

The interval 133–153 (GRASHGNSRSHNVPGSIGMAQ) is disordered. Position 153 is an N5-methylglutamine (Gln153).

The protein belongs to the universal ribosomal protein uL3 family. In terms of assembly, part of the 50S ribosomal subunit. Forms a cluster with proteins L14 and L19. Methylated by PrmB.

Its function is as follows. One of the primary rRNA binding proteins, it binds directly near the 3'-end of the 23S rRNA, where it nucleates assembly of the 50S subunit. The sequence is that of Large ribosomal subunit protein uL3 from Burkholderia thailandensis (strain ATCC 700388 / DSM 13276 / CCUG 48851 / CIP 106301 / E264).